The primary structure comprises 228 residues: uncharacterized protein (228 aa).

This sequence belongs to the HAD-like hydrolase superfamily.

The protein resides in the cytoplasm. It is found in the nucleus. This is an uncharacterized protein from Schizosaccharomyces pombe (strain 972 / ATCC 24843) (Fission yeast).